The chain runs to 439 residues: Xylose isomerase (439 aa).

Catalysis depends on residues H103 and D106. 7 residues coordinate Mg(2+): E234, E270, H273, D298, D309, D311, and D341.

The protein belongs to the xylose isomerase family. In terms of assembly, homotetramer. Mg(2+) is required as a cofactor.

The protein resides in the cytoplasm. The catalysed reaction is alpha-D-xylose = alpha-D-xylulofuranose. This chain is Xylose isomerase, found in Bacteroides fragilis (strain ATCC 25285 / DSM 2151 / CCUG 4856 / JCM 11019 / LMG 10263 / NCTC 9343 / Onslow / VPI 2553 / EN-2).